A 346-amino-acid chain; its full sequence is MQLEKELSRRKIKELLLEILSIYTPSGEEERAKDFFEKVSKEFNLNLEISKSKSYFLGKGDILLASHIDTVPGFIQPKIEGEVIYGRGAVDAKGPLIAMLLATYILNEKGYKVQFAALADEEGKSKGARELANSGIRYNYIIIGEPSNTLDVIVEYRGVLHLDILCRGNSQHSSSSKENLIVDLSKKILEIYREPSNYENFSIVPTIIKSGDYINMTPSEGYLHLDIRYSIKNSKDEILALIHNEFKTCDIKIVEDIEPVKVDVNSNIVKAVMRGIIKQGYKPKLARKAGTSDMNILKNIAKEIVTYGPGNSTLEHTNNEKISIDEIFIALTTYINAIEELCLKKK.

Residue histidine 67 coordinates Zn(2+). Aspartate 69 is a catalytic residue. Aspartate 91 serves as a coordination point for Zn(2+). Glutamate 121 serves as the catalytic Proton acceptor. Residues glutamate 122, glutamate 145, and histidine 316 each contribute to the Zn(2+) site.

The protein belongs to the peptidase M20A family. LysK subfamily. Zn(2+) serves as cofactor. The cofactor is Co(2+).

The protein localises to the cytoplasm. The enzyme catalyses [amino-group carrier protein]-C-terminal-gamma-(L-lysyl)-L-glutamate + H2O = [amino-group carrier protein]-C-terminal-L-glutamate + L-lysine. It carries out the reaction [amino-group carrier protein]-C-terminal-gamma-(L-ornithyl)-L-glutamate + H2O = [amino-group carrier protein]-C-terminal-L-glutamate + L-ornithine. Its pathway is amino-acid biosynthesis; L-lysine biosynthesis via AAA pathway; L-lysine from L-alpha-aminoadipate (Thermus route): step 5/5. The protein operates within amino-acid biosynthesis; L-arginine biosynthesis. In terms of biological role, catalyzes the release of L-lysine from [LysW]-gamma-L-lysine and the release of L-ornithine from [LysW]-L-ornithine. This Sulfurisphaera tokodaii (strain DSM 16993 / JCM 10545 / NBRC 100140 / 7) (Sulfolobus tokodaii) protein is [LysW]-lysine/[LysW]-ornithine hydrolase.